A 649-amino-acid chain; its full sequence is Nitrosuccinic acid synthase npaA (649 aa).

It belongs to the nitrosuccinic acid synthase family. It depends on FAD as a cofactor.

The catalysed reaction is L-aspartate + 3 NADPH + 3 O2 + 2 H(+) = 2-nitrobutanedioate + 3 NADP(+) + 4 H2O. It participates in mycotoxin biosynthesis. Nitrosuccinic acid synthase; part of the gene cluster that mediates the biosynthesis of the deadly neurotoxic nitroalkane 3-nitropropanoic acid (3-NPA) that acts as an antimetabolite of succinate and irreversibly inhibits succinate dehydrogenase and disrupts mitochondrial oxidative phosphorylation. NpaA catalyzes the iterative oxidation of L-aspartic acid to nitrosuccinic acid (2-nitrobutanedioate). Alternative amino acid substrates such as L-glutamate and D-aspartate are not accepted by npaA as a substrate, showing the strict substrate specificity toward L-aspartate. The nitrosuccinic acid decarboxylase npaB then facilitates decarboxylation of Nitrosuccinic acid to produce 3-NPA. The polypeptide is Nitrosuccinic acid synthase npaA (Aspergillus oryzae (strain ATCC 42149 / RIB 40) (Yellow koji mold)).